A 567-amino-acid polypeptide reads, in one-letter code: Oxygen-dependent choline dehydrogenase (567 aa).

4 to 33 (DYIIIGAGSAGNVLAARLTEDADVTVLLLE) contributes to the FAD binding site. The active-site Proton acceptor is His473.

Belongs to the GMC oxidoreductase family. FAD serves as cofactor.

The catalysed reaction is choline + A = betaine aldehyde + AH2. It carries out the reaction betaine aldehyde + NAD(+) + H2O = glycine betaine + NADH + 2 H(+). It functions in the pathway amine and polyamine biosynthesis; betaine biosynthesis via choline pathway; betaine aldehyde from choline (cytochrome c reductase route): step 1/1. Its function is as follows. Involved in the biosynthesis of the osmoprotectant glycine betaine. Catalyzes the oxidation of choline to betaine aldehyde and betaine aldehyde to glycine betaine at the same rate. In Yersinia pseudotuberculosis serotype O:1b (strain IP 31758), this protein is Oxygen-dependent choline dehydrogenase.